Reading from the N-terminus, the 339-residue chain is Pyrimidine monooxygenase RutA (339 aa).

Residues 26 to 27, Asn92, Glu101, 117 to 118, and Ser167 each bind FMN; these read IK and RY.

Belongs to the NtaA/SnaA/DszA monooxygenase family. RutA subfamily.

It carries out the reaction uracil + FMNH2 + NADH + O2 = (Z)-3-ureidoacrylate + FMN + NAD(+) + H2O + H(+). The enzyme catalyses thymine + FMNH2 + NADH + O2 = (Z)-2-methylureidoacrylate + FMN + NAD(+) + H2O + H(+). In terms of biological role, catalyzes the pyrimidine ring opening between N-3 and C-4 by an unusual flavin hydroperoxide-catalyzed mechanism, adding oxygen atoms in the process to yield ureidoacrylate peracid, that immediately reacts with FMN forming ureidoacrylate and FMN-N(5)-oxide. The FMN-N(5)-oxide reacts spontaneously with NADH to produce FMN. Requires the flavin reductase RutF to regenerate FMN in vivo. The chain is Pyrimidine monooxygenase RutA from Cronobacter sakazakii (strain ATCC BAA-894) (Enterobacter sakazakii).